The primary structure comprises 174 residues: Ribulose bisphosphate carboxylase small subunit, chloroplastic (174 aa).

A chloroplast-targeting transit peptide spans 1–45; it reads MAPTVMASSATSVAPFQGLKSTAGLPVSRRSNASSASVSNGGRIR.

It belongs to the RuBisCO small chain family. As to quaternary structure, heterohexadecamer of 8 large and 8 small subunits.

Its subcellular location is the plastid. It localises to the chloroplast. RuBisCO catalyzes two reactions: the carboxylation of D-ribulose 1,5-bisphosphate, the primary event in carbon dioxide fixation, as well as the oxidative fragmentation of the pentose substrate. Both reactions occur simultaneously and in competition at the same active site. Although the small subunit is not catalytic it is essential for maximal activity. This chain is Ribulose bisphosphate carboxylase small subunit, chloroplastic, found in Hordeum vulgare (Barley).